A 159-amino-acid chain; its full sequence is NAD(P)H-quinone oxidoreductase subunit J, chloroplastic (159 aa).

This sequence belongs to the complex I 30 kDa subunit family. In terms of assembly, NDH is composed of at least 16 different subunits, 5 of which are encoded in the nucleus.

It localises to the plastid. The protein localises to the chloroplast thylakoid membrane. The enzyme catalyses a plastoquinone + NADH + (n+1) H(+)(in) = a plastoquinol + NAD(+) + n H(+)(out). It carries out the reaction a plastoquinone + NADPH + (n+1) H(+)(in) = a plastoquinol + NADP(+) + n H(+)(out). Its function is as follows. NDH shuttles electrons from NAD(P)H:plastoquinone, via FMN and iron-sulfur (Fe-S) centers, to quinones in the photosynthetic chain and possibly in a chloroplast respiratory chain. The immediate electron acceptor for the enzyme in this species is believed to be plastoquinone. Couples the redox reaction to proton translocation, and thus conserves the redox energy in a proton gradient. This is NAD(P)H-quinone oxidoreductase subunit J, chloroplastic from Populus trichocarpa (Western balsam poplar).